Consider the following 322-residue polypeptide: Ornithine carbamoyltransferase (322 aa).

Residues 67 to 70 (STRT), glutamine 94, arginine 118, and 145 to 148 (HPCQ) each bind carbamoyl phosphate. Residues asparagine 176, aspartate 240, and 244–245 (SM) each bind L-ornithine. Carbamoyl phosphate-binding positions include 280–281 (CL) and arginine 308.

The protein belongs to the aspartate/ornithine carbamoyltransferase superfamily. OTCase family.

Its subcellular location is the cytoplasm. The catalysed reaction is carbamoyl phosphate + L-ornithine = L-citrulline + phosphate + H(+). Its pathway is amino-acid biosynthesis; L-arginine biosynthesis; L-arginine from L-ornithine and carbamoyl phosphate: step 1/3. Functionally, reversibly catalyzes the transfer of the carbamoyl group from carbamoyl phosphate (CP) to the N(epsilon) atom of ornithine (ORN) to produce L-citrulline. The chain is Ornithine carbamoyltransferase from Oceanobacillus iheyensis (strain DSM 14371 / CIP 107618 / JCM 11309 / KCTC 3954 / HTE831).